Reading from the N-terminus, the 307-residue chain is Ribonuclease Z (307 aa).

Zn(2+) is bound by residues His-63, His-65, Asp-67, His-68, His-141, Asp-212, and His-270. The active-site Proton acceptor is the Asp-67.

Belongs to the RNase Z family. In terms of assembly, homodimer. Requires Zn(2+) as cofactor.

It carries out the reaction Endonucleolytic cleavage of RNA, removing extra 3' nucleotides from tRNA precursor, generating 3' termini of tRNAs. A 3'-hydroxy group is left at the tRNA terminus and a 5'-phosphoryl group is left at the trailer molecule.. In terms of biological role, zinc phosphodiesterase, which displays some tRNA 3'-processing endonuclease activity. Probably involved in tRNA maturation, by removing a 3'-trailer from precursor tRNA. The chain is Ribonuclease Z from Bacillus cereus (strain ATCC 14579 / DSM 31 / CCUG 7414 / JCM 2152 / NBRC 15305 / NCIMB 9373 / NCTC 2599 / NRRL B-3711).